The chain runs to 576 residues: Sulfite reductase [NADPH] hemoprotein beta-component (576 aa).

Cys-435, Cys-441, Cys-480, and Cys-484 together coordinate [4Fe-4S] cluster. Cys-484 lines the siroheme pocket.

The protein belongs to the nitrite and sulfite reductase 4Fe-4S domain family. In terms of assembly, alpha(8)-beta(8). The alpha component is a flavoprotein, the beta component is a hemoprotein. Siroheme serves as cofactor. [4Fe-4S] cluster is required as a cofactor.

The enzyme catalyses hydrogen sulfide + 3 NADP(+) + 3 H2O = sulfite + 3 NADPH + 4 H(+). Its pathway is sulfur metabolism; hydrogen sulfide biosynthesis; hydrogen sulfide from sulfite (NADPH route): step 1/1. Component of the sulfite reductase complex that catalyzes the 6-electron reduction of sulfite to sulfide. This is one of several activities required for the biosynthesis of L-cysteine from sulfate. The sequence is that of Sulfite reductase [NADPH] hemoprotein beta-component from Photorhabdus laumondii subsp. laumondii (strain DSM 15139 / CIP 105565 / TT01) (Photorhabdus luminescens subsp. laumondii).